The following is a 103-amino-acid chain: Small ribosomal subunit protein uS10 (103 aa).

This sequence belongs to the universal ribosomal protein uS10 family. As to quaternary structure, part of the 30S ribosomal subunit.

Its function is as follows. Involved in the binding of tRNA to the ribosomes. This chain is Small ribosomal subunit protein uS10, found in Sphingopyxis alaskensis (strain DSM 13593 / LMG 18877 / RB2256) (Sphingomonas alaskensis).